The primary structure comprises 343 residues: DNA repair and recombination protein RadA (343 aa).

Residue 107–114 (GEFGAGKS) coordinates ATP.

It belongs to the eukaryotic RecA-like protein family.

In terms of biological role, involved in DNA repair and in homologous recombination. Binds and assemble on single-stranded DNA to form a nucleoprotein filament. Hydrolyzes ATP in a ssDNA-dependent manner and promotes DNA strand exchange between homologous DNA molecules. The chain is DNA repair and recombination protein RadA from Halobacterium salinarum (strain ATCC 29341 / DSM 671 / R1).